The sequence spans 140 residues: Anti-sigma F factor (140 aa).

This sequence belongs to the anti-sigma-factor family.

The enzyme catalyses L-seryl-[protein] + ATP = O-phospho-L-seryl-[protein] + ADP + H(+). It carries out the reaction L-threonyl-[protein] + ATP = O-phospho-L-threonyl-[protein] + ADP + H(+). Functionally, binds to sigma F and blocks its ability to form an RNA polymerase holoenzyme (E-sigma F). Phosphorylates SpoIIAA on a serine residue. This phosphorylation may enable SpoIIAA to act as an anti-anti-sigma factor that counteracts SpoIIAB and thus releases sigma F from inhibition. The chain is Anti-sigma F factor from Clostridium perfringens (strain ATCC 13124 / DSM 756 / JCM 1290 / NCIMB 6125 / NCTC 8237 / Type A).